Here is a 78-residue protein sequence, read N- to C-terminus: COP9 signalosome complex subunit 5b (78 aa).

The protein belongs to the peptidase M67A family. CSN5 subfamily. As to quaternary structure, component of the CSN complex, probably composed of CSN1, CSN2, CSN3, CSN4, CSN5 (CSN5A or CSN5B), CSN6 (CSN6A or CSN6B), CSN7 and CSN8. A divalent metal cation serves as cofactor.

It is found in the cytoplasm. The protein resides in the nucleus. In terms of biological role, probable protease subunit of the COP9 signalosome complex (CSN), a complex involved in various cellular and developmental processes such as photomorphogenesis and auxin and jasmonate responses. The CSN complex is an essential regulator of the ubiquitin (Ubl) conjugation pathway by mediating the deneddylation of the cullin subunits of the SCF-type E3 ligase complexes, leading to decrease the Ubl ligase activity of SCF. In the complex, it probably acts as the catalytic center that mediates the cleavage of Nedd8 from cullins. It however has no metalloprotease activity by itself and requires the other subunits of the CSN complex. The CSN complex is involved in repression of photomorphogenesis in darkness by regulating the activity of COP1-containing Ubl ligase complexes. The polypeptide is COP9 signalosome complex subunit 5b (CSN5B) (Brassica oleracea (Wild cabbage)).